The following is a 223-amino-acid chain: MIF4G domain-containing protein A (223 aa).

The MIF4G domain occupies 7 to 206 (QEDYKMQAFD…LEMIEYRAAG (200 aa)).

Belongs to the MIF4GD family. Interacts with eif4g1, eif4g2 and slbp; probably tethered by SLBP to the 3'-end of mRNAs ending with the histone stem-loop, it also interacts with eif4g1 which is bound to their 5'-end.

It localises to the cytoplasm. It is found in the nucleus. Its function is as follows. Functions in replication-dependent translation of histone mRNAs which differ from other eukaryotic mRNAs in that they do not end with a poly-A tail but a stem-loop. May participate in circularizing those mRNAs specifically enhancing their translation. This is MIF4G domain-containing protein A (mif4gd-a) from Xenopus laevis (African clawed frog).